The following is a 104-amino-acid chain: Large ribosomal subunit protein uL24 (104 aa).

This sequence belongs to the universal ribosomal protein uL24 family. As to quaternary structure, part of the 50S ribosomal subunit.

Its function is as follows. One of two assembly initiator proteins, it binds directly to the 5'-end of the 23S rRNA, where it nucleates assembly of the 50S subunit. One of the proteins that surrounds the polypeptide exit tunnel on the outside of the subunit. In Neorickettsia sennetsu (strain ATCC VR-367 / Miyayama) (Ehrlichia sennetsu), this protein is Large ribosomal subunit protein uL24.